Here is a 1007-residue protein sequence, read N- to C-terminus: RNA-binding protein 26 (1007 aa).

Lys-94 is covalently cross-linked (Glycyl lysine isopeptide (Lys-Gly) (interchain with G-Cter in SUMO2)). Residue Lys-106 forms a Glycyl lysine isopeptide (Lys-Gly) (interchain with G-Cter in SUMO1); alternate linkage. Lys-106 is covalently cross-linked (Glycyl lysine isopeptide (Lys-Gly) (interchain with G-Cter in SUMO2); alternate). Residues 106 to 118 (KKEEITKEEEREK) show a composition bias toward basic and acidic residues. The tract at residues 106–241 (KKEEITKEEE…YTPVSSVPSI (136 aa)) is disordered. Phosphoserine is present on Ser-127. Residues 134 to 168 (RYRENRSRDERKKDDRSRKRDYDRNPPRRDSYRDR) are compositionally biased toward basic and acidic residues. The segment covering 169-186 (YNRRRGRSRSYSRSRSRS) has biased composition (basic residues). Basic and acidic residues-rich tracts occupy residues 187–201 (WSKE…DRSR) and 209–227 (RSRE…RTDP). The span at 228 to 241 (LENNYTPVSSVPSI) shows a compositional bias: polar residues. The C3H1-type zinc-finger motif lies at 288–316 (PMPKKRCRDYDEKGFCMRGDMCPFDHGSD). The segment covering 334–388 (QPPVVEGPPPPGLPPPPPILTPPPVNLRPPVPPPGPLPPSLPPVTGPPPPLPPLQ) has biased composition (pro residues). Disordered regions lie at residues 334–404 (QPPV…SSVP) and 460–519 (IGLT…TNSP). Residues 394–404 (APPNSATSSVP) are compositionally biased toward low complexity. Ser-496 carries the post-translational modification Phosphoserine. The residue at position 510 (Lys-510) is an N6-acetyllysine. At Ser-518 the chain carries Phosphoserine. The 75-residue stretch at 532 to 606 (TKLELRKVPP…RFIKVYWHRE (75 aa)) folds into the RRM 1 domain. At Ser-616 the chain carries Phosphoserine. 2 coiled-coil regions span residues 719–795 (DNNE…KAAS) and 823–847 (KKMQ…EAAK). The disordered stretch occupies residues 853–884 (SGRGRGIHSRGRGAVHGRGRGRGRGRGVPGHA). Over residues 857–877 (RGIHSRGRGAVHGRGRGRGRG) the composition is skewed to basic residues. Residues 891 to 960 (RALEISAFTE…QDLKLAWNKP (70 aa)) form the RRM 2 domain. Residues 966–1007 (AVETEEVEPDEEEFQEESLVDDSLLQDDDEEEEDNESRSWRR) are disordered. Acidic residues predominate over residues 968–1000 (ETEEVEPDEEEFQEESLVDDSLLQDDDEEEEDN).

May be involved in the turnover of nuclear polyadenylated (pA+) RNA. The protein is RNA-binding protein 26 of Homo sapiens (Human).